The primary structure comprises 1391 residues: Axoneme-associated protein mst101(2) (1391 aa).

2 disordered regions span residues 170 to 213 (ECNQ…GKKL) and 280 to 300 (SSEPKKKGKKKKNDEKKEKEL). Over residues 184–201 (TKKGKTKGKSGGGNKKRS) the composition is skewed to basic residues. A compositionally biased stretch (basic and acidic residues) spans 291–300 (KNDEKKEKEL). 59 consecutive repeat copies span residues 332 to 347 (KKKCKDLGRKMKEEAE), 348 to 363 (KKKCAALAKKQKEEDE), 364 to 379 (KKACKELAKKKKEADE), 380 to 395 (KKKCEEAANKEKKAAE), 396 to 411 (KKKCEKAAKERKEAAE), 412 to 427 (KKKCEEAAKKEKEAAE), 428 to 443 (RKKCEELAKNIKKAAE), 444 to 459 (KKKCKEAAKKEKEAAE), 460 to 475 (RKKCEELAKKIKKAAE), 476 to 491 (KKKCEETAKKGKEVAE), 492 to 507 (RKKCEELAKKIKKAEI), 508 to 523 (KKKCKKLAKKEKETAE), 524 to 539 (KKKCEKAAKKRKEAAE), 540 to 555 (KKKCEKAAKKRKEAAE), 556 to 571 (KKKCEKSAKKRKEAAE), 572 to 587 (KKKCEKAAKERKEAAE), 588 to 603 (KKKCEEAAKKEKEVAE), 604 to 619 (RKKCEELAKKIKKAAE), 620 to 635 (KKKCKEAAKKEKEAAE), 636 to 651 (REKCGELAKKIKKAAE), 652 to 667 (KKKCKKLAKKEKETAE), 668 to 683 (KKKCEKAAKKRKEAAE), 684 to 699 (KKKCAEAAKKEKEAAE), 700 to 715 (KKKCEEAAKKEKEAAE), 716 to 731 (RKKCEELAKKIKKAAE), 732 to 747 (KKKCKKLAKKKKAGEK), 748 to 763 (NKLKKGNKKGKKALKE), 764 to 779 (KKKCRELAKKKAAEKK), 780 to 795 (KCKEAAKKEKEAAEKK), 796 to 811 (KCEKTAKKRKEEAEKK), 812 to 827 (KCEKTAKKRKEAAEKK), 828 to 843 (KCEKAAKKRKEEAEKK), 844 to 859 (KCEKTAKKRKETAEKK), 860 to 875 (KCEKAAKKRKQAAEKK), 876 to 891 (KCEKAAKKRKEAAEKK), 892 to 907 (KCAEAAKKEKELAEKK), 908 to 923 (KCEEAAKKEKEVAERK), 924 to 939 (KCEELAKKIKKAAEKK), 940 to 955 (KCKKLAKKEKKAGEKN), 956 to 971 (KLKKKAGKGKKKCKKL), 972 to 987 (GKKSKRAAEKKKCAEA), 988 to 1003 (AKKEKEAATKKKCEER), 1004 to 1019 (AKKQKEAAEKKQCEER), 1020 to 1035 (AKKLKEAAEQKQCEER), 1036 to 1051 (AKKLKEAAEKKQCEER), 1052 to 1067 (AKKLKEAAEQKQCEER), 1068 to 1083 (AKKLKEAAEKKQCEER), 1084 to 1099 (AKKEKEAAEKKQCEER), 1100 to 1115 (AKKLKEAAEKKQCEER), 1116 to 1131 (AKKEKEAAEKKRCEEA), 1132 to 1147 (AKREKEAAEKKKCAEA), 1148 to 1163 (AKKEKEATEKQKCAEA), 1164 to 1179 (AKKEKEAAEKKKCAEA), 1180 to 1195 (AKREKEAAQKKKCADL), 1196 to 1211 (AKKEQEPAEMKKCEEA), 1212 to 1227 (AKKEKEAAEKQKCAKA), 1228 to 1243 (AKKEKEAAEKKKCAEA), 1244 to 1259 (AKKEQEAAEKKKCAEA), and 1260 to 1275 (AKKEKEAEKKRKCEKA). Positions 332 to 1275 (KKKCKDLGRK…AEKKRKCEKA (944 aa)) are 59 X 16 AA approximate tandem repeats of [KR]-K-X-C-X-X-X-A-K-X-X-K-X-X-X-E. The segment at 370-429 (LAKKKKEADEKKKCEEAANKEKKAAEKKKCEKAAKERKEAAEKKKCEEAAKKEKEAAERK) is disordered. A disordered region spans residues 516-577 (KKEKETAEKK…EAAEKKKCEK (62 aa)). A compositionally biased stretch (basic and acidic residues) spans 517–577 (KEKETAEKKK…EAAEKKKCEK (61 aa)). Over residues 729–765 (AAEKKKCKKLAKKKKAGEKNKLKKGNKKGKKALKEKK) the composition is skewed to basic residues. Disordered stretches follow at residues 729 to 881 (AAEK…EKAA), 900 to 922 (EKELAEKKKCEEAAKKEKEVAER), and 934 to 1013 (KAAE…AAEK). The span at 766–881 (KCRELAKKKA…AEKKKCEKAA (116 aa)) shows a compositional bias: basic and acidic residues. Basic residues-rich tracts occupy residues 934 to 949 (KAAEKKKCKKLAKKEK) and 956 to 976 (KLKKKAGKGKKKCKKLGKKSK). The segment covering 977 to 1013 (RAAEKKKCAEAAKKEKEAATKKKCEERAKKQKEAAEK) has biased composition (basic and acidic residues). 2 disordered regions span residues 1076 to 1095 (EKKQCEERAKKEKEAAEKKQ) and 1104 to 1212 (KEAA…EEAA). The segment covering 1353 to 1370 (KKEKEAAEKKKRCKDLAK) has biased composition (basic and acidic residues). The segment at 1353–1391 (KKEKEAAEKKKRCKDLAKNKKKGHKKKGRNENRKKRTDC) is disordered. Residues 1371 to 1391 (NKKKGHKKKGRNENRKKRTDC) are compositionally biased toward basic residues.

As to expression, testis. Primary spermatocytes and early spermatids.

Its subcellular location is the cytoplasm. Functionally, possible structural role in the sperm tail. This is Axoneme-associated protein mst101(2) (mst101(2)) from Drosophila hydei (Fruit fly).